Here is an 884-residue protein sequence, read N- to C-terminus: Protein translocase subunit SecA (884 aa).

ATP is bound by residues Q83, 101–105, and D491; that span reads GEGKT.

Belongs to the SecA family.

It is found in the plastid. The protein localises to the chloroplast stroma. It localises to the chloroplast thylakoid membrane. The catalysed reaction is ATP + H2O + cellular proteinSide 1 = ADP + phosphate + cellular proteinSide 2.. Has a central role in coupling the hydrolysis of ATP to the transfer of proteins across the thylakoid membrane. In Porphyra purpurea (Red seaweed), this protein is Protein translocase subunit SecA.